Consider the following 330-residue polypeptide: D-lactate dehydrogenase (330 aa).

Residues 155–156 (RI), aspartate 175, 206–207 (MP), asparagine 212, 233–235 (MAR), and aspartate 259 each bind NAD(+). Arginine 235 is a catalytic residue. Residue glutamate 264 is part of the active site. Histidine 296 functions as the Proton donor in the catalytic mechanism.

This sequence belongs to the D-isomer specific 2-hydroxyacid dehydrogenase family.

It catalyses the reaction (R)-lactate + NAD(+) = pyruvate + NADH + H(+). This is D-lactate dehydrogenase (ldhD) from Streptococcus pyogenes serotype M1.